Consider the following 141-residue polypeptide: Large ribosomal subunit protein uL11 (141 aa).

It belongs to the universal ribosomal protein uL11 family. Part of the ribosomal stalk of the 50S ribosomal subunit. Interacts with L10 and the large rRNA to form the base of the stalk. L10 forms an elongated spine to which L12 dimers bind in a sequential fashion forming a multimeric L10(L12)X complex. Post-translationally, one or more lysine residues are methylated.

Forms part of the ribosomal stalk which helps the ribosome interact with GTP-bound translation factors. This Clostridium botulinum (strain Kyoto / Type A2) protein is Large ribosomal subunit protein uL11.